An 86-amino-acid polypeptide reads, in one-letter code: Small ribosomal subunit protein uS17 (86 aa).

It belongs to the universal ribosomal protein uS17 family. In terms of assembly, part of the 30S ribosomal subunit.

Functionally, one of the primary rRNA binding proteins, it binds specifically to the 5'-end of 16S ribosomal RNA. The sequence is that of Small ribosomal subunit protein uS17 from Rhizorhabdus wittichii (strain DSM 6014 / CCUG 31198 / JCM 15750 / NBRC 105917 / EY 4224 / RW1) (Sphingomonas wittichii).